The chain runs to 145 residues: Small ribosomal subunit protein uS19 (145 aa).

Ala2 is subject to N-acetylalanine. Lys108 participates in a covalent cross-link: Glycyl lysine isopeptide (Lys-Gly) (interchain with G-Cter in SUMO2).

Belongs to the universal ribosomal protein uS19 family. Component of the small ribosomal subunit.

It is found in the cytoplasm. In terms of biological role, component of the small ribosomal subunit. The ribosome is a large ribonucleoprotein complex responsible for the synthesis of proteins in the cell. This Mesocricetus auratus (Golden hamster) protein is Small ribosomal subunit protein uS19 (RPS15).